Reading from the N-terminus, the 335-residue chain is Acetyl-coenzyme A carboxylase carboxyl transferase subunit alpha (335 aa).

Positions 48-308 (TLEKKVDALR…KGMLIEELKA (261 aa)) constitute a CoA carboxyltransferase C-terminal domain.

Belongs to the AccA family. Acetyl-CoA carboxylase is a heterohexamer composed of biotin carboxyl carrier protein (AccB), biotin carboxylase (AccC) and two subunits each of ACCase subunit alpha (AccA) and ACCase subunit beta (AccD).

The protein localises to the cytoplasm. It catalyses the reaction N(6)-carboxybiotinyl-L-lysyl-[protein] + acetyl-CoA = N(6)-biotinyl-L-lysyl-[protein] + malonyl-CoA. Its pathway is lipid metabolism; malonyl-CoA biosynthesis; malonyl-CoA from acetyl-CoA: step 1/1. Component of the acetyl coenzyme A carboxylase (ACC) complex. First, biotin carboxylase catalyzes the carboxylation of biotin on its carrier protein (BCCP) and then the CO(2) group is transferred by the carboxyltransferase to acetyl-CoA to form malonyl-CoA. This is Acetyl-coenzyme A carboxylase carboxyl transferase subunit alpha from Chlorobium luteolum (strain DSM 273 / BCRC 81028 / 2530) (Pelodictyon luteolum).